Reading from the N-terminus, the 51-residue chain is FVNQHLCGPHLVEALYLVCGERGFFYAPKTGVVDQCCTSICSLYQLQNYCN.

3 disulfides stabilise this stretch: Cys-7–Cys-37, Cys-19–Cys-50, and Cys-36–Cys-41.

This sequence belongs to the insulin family. In terms of assembly, heterodimer of a B chain and an A chain linked by two disulfide bonds.

It is found in the secreted. Functionally, insulin decreases blood glucose concentration. It increases cell permeability to monosaccharides, amino acids and fatty acids. It accelerates glycolysis, the pentose phosphate cycle, and glycogen synthesis in liver. This is Insulin (INS) from Saimiri sciureus (Common squirrel monkey).